A 239-amino-acid chain; its full sequence is 1-(5-phosphoribosyl)-5-[(5-phosphoribosylamino)methylideneamino] imidazole-4-carboxamide isomerase (239 aa).

Catalysis depends on Asp-8, which acts as the Proton acceptor. The active-site Proton donor is the Asp-129.

The protein belongs to the HisA/HisF family.

It localises to the cytoplasm. It catalyses the reaction 1-(5-phospho-beta-D-ribosyl)-5-[(5-phospho-beta-D-ribosylamino)methylideneamino]imidazole-4-carboxamide = 5-[(5-phospho-1-deoxy-D-ribulos-1-ylimino)methylamino]-1-(5-phospho-beta-D-ribosyl)imidazole-4-carboxamide. The protein operates within amino-acid biosynthesis; L-histidine biosynthesis; L-histidine from 5-phospho-alpha-D-ribose 1-diphosphate: step 4/9. The chain is 1-(5-phosphoribosyl)-5-[(5-phosphoribosylamino)methylideneamino] imidazole-4-carboxamide isomerase from Bacillus cereus (strain AH820).